Here is a 196-residue protein sequence, read N- to C-terminus: CASP-like protein 2U1 (196 aa).

The Cytoplasmic portion of the chain corresponds to 1-11 (MAPMECVRRRN). A helical membrane pass occupies residues 12–32 (VGELVLRCAATLVCMLSLMLL). Residues 33–58 (VRDQQIAVQEVGVTSVTTQLRYSSST) are Extracellular-facing. The chain crosses the membrane as a helical span at residues 59–79 (GLVYLVYANGLVALYCFVVVL). The Cytoplasmic portion of the chain corresponds to 80–95 (TSSFNGGSVMRRNKSG). Residues 96-116 (AWALFVLDQVLACILLSAASA) form a helical membrane-spanning segment. Residues 117–148 (ASEIAFLVEKGAKKTIWDSKCIVYGHFCRMLE) are Extracellular-facing. The helical transmembrane segment at 149–169 (VSIATSFIAVIMLGSICVLSA) threads the bilayer. Topologically, residues 170-196 (KQLFQQYTHYARIVNMVKLKSTPNSLL) are cytoplasmic.

It belongs to the Casparian strip membrane proteins (CASP) family. In terms of assembly, homodimer and heterodimers.

Its subcellular location is the cell membrane. The sequence is that of CASP-like protein 2U1 from Pteridium aquilinum subsp. aquilinum (Bracken fern).